Here is a 264-residue protein sequence, read N- to C-terminus: Inner membrane ABC transporter permease protein YdcV (264 aa).

Residues 1 to 12 (MHSERAPFFLKL) lie on the Cytoplasmic side of the membrane. Residues 13–33 (AAWGGVVFLHFPILIIAAYAF) form a helical membrane-spanning segment. Over 34 to 70 (NTEDAAFSFPPQGLTLRWFSVAAQRSDILDAVTLSLK) the chain is Periplasmic. Residues 65 to 252 (VTLSLKVAAL…MLVTTLPILG (188 aa)) enclose the ABC transmembrane type-1 domain. A helical transmembrane segment spans residues 71 to 91 (VAALATLIALVLGTLAAAALW). Over 92 to 100 (RRDFFGKNA) the chain is Cytoplasmic. The chain crosses the membrane as a helical span at residues 101–121 (ISLLLLLPIALPGIVTGLALL). Residues 122–128 (TAFKTIN) lie on the Periplasmic side of the membrane. A helical membrane pass occupies residues 129-149 (LEPGFFTIVVGHATFCVVVVF). Residues 150–189 (NNVIARFRRTSWSLVEASMDLGANGWQTFRYVVLPNLSSA) are Cytoplasmic-facing. A helical membrane pass occupies residues 190-210 (LLAGGMLAFALSFDEIIVTTF). Topologically, residues 211-236 (TAGHERTLPLWLLNQLGRPRDVPVTN) are periplasmic. The chain crosses the membrane as a helical span at residues 237–257 (VVALLVMLVTTLPILGAWWLT). Over 258–264 (REGDNGQ) the chain is Cytoplasmic.

Belongs to the binding-protein-dependent transport system permease family. CysTW subfamily.

It localises to the cell inner membrane. Its function is as follows. Probably part of the ABC transporter complex YdcSTUV. Probably responsible for the translocation of the substrate across the membrane. The protein is Inner membrane ABC transporter permease protein YdcV (ydcV) of Shigella flexneri.